The following is a 311-amino-acid chain: Pyrimidine-specific ribonucleoside hydrolase RihA (311 aa).

His-240 is a catalytic residue.

Belongs to the IUNH family. RihA subfamily.

Functionally, hydrolyzes cytidine or uridine to ribose and cytosine or uracil, respectively. The chain is Pyrimidine-specific ribonucleoside hydrolase RihA from Salmonella paratyphi C (strain RKS4594).